A 147-amino-acid chain; its full sequence is 2-amino-4-hydroxy-6-hydroxymethyldihydropteridine pyrophosphokinase (147 aa).

This sequence belongs to the HPPK family.

It catalyses the reaction 6-hydroxymethyl-7,8-dihydropterin + ATP = (7,8-dihydropterin-6-yl)methyl diphosphate + AMP + H(+). It functions in the pathway cofactor biosynthesis; tetrahydrofolate biosynthesis; 2-amino-4-hydroxy-6-hydroxymethyl-7,8-dihydropteridine diphosphate from 7,8-dihydroneopterin triphosphate: step 4/4. In terms of biological role, catalyzes the transfer of pyrophosphate from adenosine triphosphate (ATP) to 6-hydroxymethyl-7,8-dihydropterin, an enzymatic step in folate biosynthesis pathway. This Porphyromonas gingivalis (strain ATCC 33277 / DSM 20709 / CIP 103683 / JCM 12257 / NCTC 11834 / 2561) protein is 2-amino-4-hydroxy-6-hydroxymethyldihydropteridine pyrophosphokinase (folK).